The following is a 42-amino-acid chain: uncharacterized protein (42 aa).

This is an uncharacterized protein from Treponema pallidum (strain Nichols).